Reading from the N-terminus, the 129-residue chain is Small ribosomal subunit protein bS18c (129 aa).

Residues 1 to 20 (MGTSNTQKPQKQVPKRKKYK) form a disordered region.

This sequence belongs to the bacterial ribosomal protein bS18 family. As to quaternary structure, part of the 30S ribosomal subunit.

Its subcellular location is the plastid. The protein localises to the chloroplast. This is Small ribosomal subunit protein bS18c from Stigeoclonium helveticum (Green alga).